The primary structure comprises 498 residues: Glutathione synthetase large chain (498 aa).

Substrate is bound at residue Arg128. Residue Glu146 coordinates ATP. Residues Glu146 and Asn148 each coordinate Mg(2+). Substrate-binding positions include 150–153 (ISVS), 233–235 (ERN), Gln239, and 291–294 (RVGY). Lys330 lines the ATP pocket. Ser356 carries the phosphoserine modification. Residues 387-396 (KPQREGGGNN), Tyr398, 420-423 (MRYI), and Glu446 contribute to the ATP site. Glu391 provides a ligand contact to Mg(2+). Position 473 (Arg473) interacts with substrate. ATP is bound by residues Lys475 and Glu481. 484 to 485 (VA) serves as a coordination point for substrate.

It belongs to the eukaryotic GSH synthase family. As to quaternary structure, heterodimer composed of a large and a small chain. It depends on Mg(2+) as a cofactor.

It carries out the reaction gamma-L-glutamyl-L-cysteine + glycine + ATP = glutathione + ADP + phosphate + H(+). The protein operates within sulfur metabolism; glutathione biosynthesis; glutathione from L-cysteine and L-glutamate: step 2/2. The polypeptide is Glutathione synthetase large chain (gsa1) (Schizosaccharomyces pombe (strain 972 / ATCC 24843) (Fission yeast)).